We begin with the raw amino-acid sequence, 186 residues long: Ribosome-recycling factor (186 aa).

Belongs to the RRF family.

The protein resides in the cytoplasm. Responsible for the release of ribosomes from messenger RNA at the termination of protein biosynthesis. May increase the efficiency of translation by recycling ribosomes from one round of translation to another. The chain is Ribosome-recycling factor from Herminiimonas arsenicoxydans.